The primary structure comprises 483 residues: Aspartyl/glutamyl-tRNA(Asn/Gln) amidotransferase subunit B (483 aa).

This sequence belongs to the GatB/GatE family. GatB subfamily. As to quaternary structure, heterotrimer of A, B and C subunits.

The catalysed reaction is L-glutamyl-tRNA(Gln) + L-glutamine + ATP + H2O = L-glutaminyl-tRNA(Gln) + L-glutamate + ADP + phosphate + H(+). It carries out the reaction L-aspartyl-tRNA(Asn) + L-glutamine + ATP + H2O = L-asparaginyl-tRNA(Asn) + L-glutamate + ADP + phosphate + 2 H(+). In terms of biological role, allows the formation of correctly charged Asn-tRNA(Asn) or Gln-tRNA(Gln) through the transamidation of misacylated Asp-tRNA(Asn) or Glu-tRNA(Gln) in organisms which lack either or both of asparaginyl-tRNA or glutaminyl-tRNA synthetases. The reaction takes place in the presence of glutamine and ATP through an activated phospho-Asp-tRNA(Asn) or phospho-Glu-tRNA(Gln). The sequence is that of Aspartyl/glutamyl-tRNA(Asn/Gln) amidotransferase subunit B from Rickettsia rickettsii (strain Iowa).